The chain runs to 193 residues: Peptidyl-tRNA hydrolase (193 aa).

Y14 contributes to the tRNA binding site. The active-site Proton acceptor is the H19. Residues F64, N66, and N112 each coordinate tRNA.

It belongs to the PTH family. Monomer.

Its subcellular location is the cytoplasm. It catalyses the reaction an N-acyl-L-alpha-aminoacyl-tRNA + H2O = an N-acyl-L-amino acid + a tRNA + H(+). Functionally, hydrolyzes ribosome-free peptidyl-tRNAs (with 1 or more amino acids incorporated), which drop off the ribosome during protein synthesis, or as a result of ribosome stalling. Its function is as follows. Catalyzes the release of premature peptidyl moieties from peptidyl-tRNA molecules trapped in stalled 50S ribosomal subunits, and thus maintains levels of free tRNAs and 50S ribosomes. The chain is Peptidyl-tRNA hydrolase from Bartonella bacilliformis (strain ATCC 35685 / KC583 / Herrer 020/F12,63).